The following is a 126-amino-acid chain: SOSS complex subunit C homolog (126 aa).

The tract at residues 106–126 is disordered; it reads LEPLPSPATTPTAPPSHSISK. Positions 107 to 119 are enriched in pro residues; sequence EPLPSPATTPTAP.

The protein belongs to the SOSS-C family.

The sequence is that of SOSS complex subunit C homolog from Drosophila sechellia (Fruit fly).